The following is a 138-amino-acid chain: Putative pre-16S rRNA nuclease (138 aa).

This sequence belongs to the YqgF nuclease family.

Its subcellular location is the cytoplasm. Functionally, could be a nuclease involved in processing of the 5'-end of pre-16S rRNA. The sequence is that of Putative pre-16S rRNA nuclease from Caldicellulosiruptor bescii (strain ATCC BAA-1888 / DSM 6725 / KCTC 15123 / Z-1320) (Anaerocellum thermophilum).